The chain runs to 325 residues: Pyruvate dehydrogenase E1 component subunit beta (325 aa).

Glutamate 60 serves as a coordination point for thiamine diphosphate.

As to quaternary structure, heterodimer of an alpha and a beta chain. Requires thiamine diphosphate as cofactor.

It carries out the reaction N(6)-[(R)-lipoyl]-L-lysyl-[protein] + pyruvate + H(+) = N(6)-[(R)-S(8)-acetyldihydrolipoyl]-L-lysyl-[protein] + CO2. Its function is as follows. The pyruvate dehydrogenase complex catalyzes the overall conversion of pyruvate to acetyl-CoA and CO(2). It contains multiple copies of three enzymatic components: pyruvate dehydrogenase (E1), dihydrolipoamide acetyltransferase (E2) and lipoamide dehydrogenase (E3). The polypeptide is Pyruvate dehydrogenase E1 component subunit beta (pdhB) (Geobacillus stearothermophilus (Bacillus stearothermophilus)).